The primary structure comprises 251 residues: Proteasome subunit alpha type-7 (251 aa).

Belongs to the peptidase T1A family. The 26S proteasome consists of a 20S proteasome core and two 19S regulatory subunits. The 20S proteasome core is composed of 28 subunits that are arranged in four stacked rings, resulting in a barrel-shaped structure. The two end rings are each formed by seven alpha subunits, and the two central rings are each formed by seven beta subunits. The catalytic chamber with the active sites is on the inside of the barrel.

It localises to the cytoplasm. It is found in the nucleus. Functionally, the proteasome is a multicatalytic proteinase complex which is characterized by its ability to cleave peptides with Arg, Phe, Tyr, Leu, and Glu adjacent to the leaving group at neutral or slightly basic pH. The proteasome has an ATP-dependent proteolytic activity. The protein is Proteasome subunit alpha type-7 (psma7) of Carassius auratus (Goldfish).